Reading from the N-terminus, the 263-residue chain is MRVIMGTASLGSIWAVFLLPLVFGVPTEEPTFGESVASHLPKNCQRCCDPEDPLSPADTVNAVPPYVLPEVRPYINITILKGDKGDRGPSGTPGKPGKNGTRGDRGSQGIKGDKGQAGSPGSSCQTHYSAFSVGRKTGLHSSENFLSLLFDRVFVNTDGHFDMATGRFVAPLRGLYFFSLNVHSWNYKETYVHIVHNEQAVVILYAQPSERSIMQSQSVMLPLVPGDYVWVRLFKRERENGIYSDDMDTYITFSGHLIKAEDN.

A signal peptide spans 1–24 (MRVIMGTASLGSIWAVFLLPLVFG). Residue Asn-76 is glycosylated (N-linked (GlcNAc...) asparagine). A disordered region spans residues 80 to 123 (LKGDKGDRGPSGTPGKPGKNGTRGDRGSQGIKGDKGQAGSPGSS). The Collagen-like domain maps to 82-123 (GDKGDRGPSGTPGKPGKNGTRGDRGSQGIKGDKGQAGSPGSS). The region spanning 124–263 (CQTHYSAFSV…SGHLIKAEDN (140 aa)) is the C1q domain.

It localises to the secreted. The sequence is that of Complement C1q tumor necrosis factor-related protein 6 (C1qtnf6) from Rattus norvegicus (Rat).